The following is a 282-amino-acid chain: Pyridoxal 5'-phosphate synthase subunit PdxS (282 aa).

A D-ribose 5-phosphate-binding site is contributed by aspartate 14. Residue lysine 71 is the Schiff-base intermediate with D-ribose 5-phosphate of the active site. Residue glycine 143 participates in D-ribose 5-phosphate binding. Arginine 155 is a D-glyceraldehyde 3-phosphate binding site. D-ribose 5-phosphate is bound by residues glycine 204 and 225 to 226 (GS).

This sequence belongs to the PdxS/SNZ family. As to quaternary structure, in the presence of PdxT, forms a dodecamer of heterodimers.

It carries out the reaction aldehydo-D-ribose 5-phosphate + D-glyceraldehyde 3-phosphate + L-glutamine = pyridoxal 5'-phosphate + L-glutamate + phosphate + 3 H2O + H(+). Its pathway is cofactor biosynthesis; pyridoxal 5'-phosphate biosynthesis. Its function is as follows. Catalyzes the formation of pyridoxal 5'-phosphate from ribose 5-phosphate (RBP), glyceraldehyde 3-phosphate (G3P) and ammonia. The ammonia is provided by the PdxT subunit. Can also use ribulose 5-phosphate and dihydroxyacetone phosphate as substrates, resulting from enzyme-catalyzed isomerization of RBP and G3P, respectively. The protein is Pyridoxal 5'-phosphate synthase subunit PdxS of Treponema denticola (strain ATCC 35405 / DSM 14222 / CIP 103919 / JCM 8153 / KCTC 15104).